We begin with the raw amino-acid sequence, 75 residues long: Large ribosomal subunit protein uL29 (75 aa).

It belongs to the universal ribosomal protein uL29 family.

In Pyrobaculum aerophilum (strain ATCC 51768 / DSM 7523 / JCM 9630 / CIP 104966 / NBRC 100827 / IM2), this protein is Large ribosomal subunit protein uL29.